Consider the following 658-residue polypeptide: Aspartate--tRNA ligase, mitochondrial (658 aa).

Glu-198 lines the L-aspartate pocket. The interval 226–229 (QQYK) is aspartate. Residue Arg-248 coordinates L-aspartate. ATP is bound by residues 248 to 250 (RDE) and Glu-553. Arg-560 is a binding site for L-aspartate. 604 to 607 (GFDR) serves as a coordination point for ATP.

This sequence belongs to the class-II aminoacyl-tRNA synthetase family. Type 1 subfamily.

It localises to the mitochondrion matrix. It catalyses the reaction tRNA(Asp) + L-aspartate + ATP = L-aspartyl-tRNA(Asp) + AMP + diphosphate. Catalyzes the attachment of aspartate to tRNA(Asp) in the mitochondrion. The sequence is that of Aspartate--tRNA ligase, mitochondrial (MSD1) from Saccharomyces cerevisiae (strain ATCC 204508 / S288c) (Baker's yeast).